Here is a 530-residue protein sequence, read N- to C-terminus: 2,3-bisphosphoglycerate-independent phosphoglycerate mutase (530 aa).

Mn(2+) is bound by residues Asp15 and Ser65. Residue Ser65 is the Phosphoserine intermediate of the active site. Residues His126, 155–156, Arg187, Arg193, 257–260, and Lys330 contribute to the substrate site; these read RD and RPDR. Residues Asp397, His401, Asp438, His439, and His456 each coordinate Mn(2+).

The protein belongs to the BPG-independent phosphoglycerate mutase family. As to quaternary structure, monomer. Requires Mn(2+) as cofactor.

The enzyme catalyses (2R)-2-phosphoglycerate = (2R)-3-phosphoglycerate. Its pathway is carbohydrate degradation; glycolysis; pyruvate from D-glyceraldehyde 3-phosphate: step 3/5. In terms of biological role, catalyzes the interconversion of 2-phosphoglycerate and 3-phosphoglycerate. The sequence is that of 2,3-bisphosphoglycerate-independent phosphoglycerate mutase from Synechococcus sp. (strain JA-2-3B'a(2-13)) (Cyanobacteria bacterium Yellowstone B-Prime).